The following is a 445-amino-acid chain: Phosphoglucosamine mutase 1 (445 aa).

Serine 102 acts as the Phosphoserine intermediate in catalysis. The Mg(2+) site is built by serine 102, aspartate 241, aspartate 243, and aspartate 245. At serine 102 the chain carries Phosphoserine.

The protein belongs to the phosphohexose mutase family. Mg(2+) serves as cofactor. In terms of processing, activated by phosphorylation.

It catalyses the reaction alpha-D-glucosamine 1-phosphate = D-glucosamine 6-phosphate. Catalyzes the conversion of glucosamine-6-phosphate to glucosamine-1-phosphate. The protein is Phosphoglucosamine mutase 1 of Shewanella frigidimarina (strain NCIMB 400).